Consider the following 301-residue polypeptide: Oxaloacetate tautomerase YisK (301 aa).

Lys99 serves as a coordination point for oxalate. Residues Glu148, Glu150, and Asp179 each coordinate Mn(2+). Residues Lys196 and Thr266 each coordinate oxalate.

Belongs to the FAH family. In terms of assembly, homodimer. The cofactor is Mg(2+). Mn(2+) serves as cofactor.

It localises to the cytoplasm. The enzyme catalyses oxaloacetate = enol-oxaloacetate. It catalyses the reaction oxaloacetate + H(+) = pyruvate + CO2. Its function is as follows. Tautomerase that converts enol-oxaloacetate to the keto form of oxaloacetate. Also shows weak oxaloacetate decarboxylase (ODx), catalyzing the decarboxylation of oxaloacetate (OAA) to pyruvate and CO(2). The polypeptide is Oxaloacetate tautomerase YisK (Bacillus subtilis (strain 168)).